We begin with the raw amino-acid sequence, 273 residues long: Ribosomal RNA small subunit methyltransferase A (273 aa).

S-adenosyl-L-methionine is bound by residues Asn-17, Leu-19, Gly-44, Glu-65, and Asn-111.

The protein belongs to the class I-like SAM-binding methyltransferase superfamily. rRNA adenine N(6)-methyltransferase family. RsmA subfamily.

The protein localises to the cytoplasm. It catalyses the reaction adenosine(1518)/adenosine(1519) in 16S rRNA + 4 S-adenosyl-L-methionine = N(6)-dimethyladenosine(1518)/N(6)-dimethyladenosine(1519) in 16S rRNA + 4 S-adenosyl-L-homocysteine + 4 H(+). In terms of biological role, specifically dimethylates two adjacent adenosines (A1518 and A1519) in the loop of a conserved hairpin near the 3'-end of 16S rRNA in the 30S particle. May play a critical role in biogenesis of 30S subunits. The polypeptide is Ribosomal RNA small subunit methyltransferase A (Buchnera aphidicola subsp. Acyrthosiphon pisum (strain APS) (Acyrthosiphon pisum symbiotic bacterium)).